Here is a 582-residue protein sequence, read N- to C-terminus: Arginine--tRNA ligase (582 aa).

A 'HIGH' region motif is present at residues 136–146; sequence ANPTGPMHMGH.

It belongs to the class-I aminoacyl-tRNA synthetase family. Monomer.

The protein localises to the cytoplasm. It carries out the reaction tRNA(Arg) + L-arginine + ATP = L-arginyl-tRNA(Arg) + AMP + diphosphate. The polypeptide is Arginine--tRNA ligase (Novosphingobium aromaticivorans (strain ATCC 700278 / DSM 12444 / CCUG 56034 / CIP 105152 / NBRC 16084 / F199)).